The chain runs to 429 residues: 26S proteasome regulatory subunit RPN7 (429 aa).

Phosphoserine is present on residues Ser8 and Ser77. One copy of the TPR repeat lies at 131–164; sequence AQAWINLGEYYAQIGDKDNAEKTLGKSLSKAIST. A PCI domain is found at 223-395; the sequence is NFKEAAKLLV…GIVETNRPDN (173 aa).

As to quaternary structure, the 26S proteasome is composed of a core protease, known as the 20S proteasome, capped at one or both ends by the 19S regulatory complex (RC). The RC is composed of at least 18 different subunits in two subcomplexes, the base and the lid, which form the portions proximal and distal to the 20S proteolytic core, respectively. Component of the lid subcomplex of the 19S RC.

The protein resides in the nucleus. Component of the 19S cap proteasome complex which acts as a regulatory subunit of the 26S proteasome, involved in the ATP-dependent degradation of ubiquitinated proteins. This is 26S proteasome regulatory subunit RPN7 from Saccharomyces cerevisiae (strain ATCC 204508 / S288c) (Baker's yeast).